Reading from the N-terminus, the 509-residue chain is 5-hydroxytryptamine receptor (509 aa).

The Extracellular segment spans residues 1–99 (MANFTFGDLA…YSHEHLVLTS (99 aa)). N-linked (GlcNAc...) asparagine glycans are attached at residues Asn-3, Asn-47, Asn-58, Asn-68, Asn-72, and Asn-78. Residues 100-122 (VILGLFVLCCIIGNCFVIAAVML) traverse the membrane as a helical segment. Over 123 to 132 (ERSLHNVANY) the chain is Cytoplasmic. A helical membrane pass occupies residues 133–154 (LILSLAVADLMVAVLVMPLSVV). The Extracellular portion of the chain corresponds to 155-169 (SEISKVWFLHSEVCD). A disulfide bridge connects residues Cys-168 and Cys-246. The chain crosses the membrane as a helical span at residues 170-191 (MWISVDVLCCTASILHLVAIAM). The Cytoplasmic segment spans residues 192–210 (DRYWAVTSIDYIRRRSARR). The chain crosses the membrane as a helical span at residues 211–233 (ILLMIMVVWIVALFISIPPLFGW). The Extracellular portion of the chain corresponds to 234-259 (RDPNNDPDKTGTCIISQDKGYTIFST). A helical transmembrane segment spans residues 260 to 281 (VGAFYLPMLVMMIIYIRIWLVA). Topologically, residues 282 to 432 (RSRIRKDKFQ…LKRERKAART (151 aa)) are cytoplasmic. Positions 323-372 (SPDSTTEKKKRRAPFKSYGCSPRPERKKNRAKKLPENANGVNSNSSSSER) are disordered. Residues 433–456 (LAIITGAFLICWLPFFIIALIGPF) form a helical membrane-spanning segment. Residues 457-465 (VDPEGIPPF) are Extracellular-facing. A helical membrane pass occupies residues 466–488 (ARSFVLWLGYFNSLLNPIIYTIF). The Cytoplasmic portion of the chain corresponds to 489-509 (SPEFRSAFQKILFGKYRRGHR).

The protein belongs to the G-protein coupled receptor 1 family.

Its subcellular location is the cell membrane. Its function is as follows. This is a receptor for 5-hydroxytryptamine (serotonin), a biogenic hormone that function as a neurotransmitter, a hormone, and a mitogen. The polypeptide is 5-hydroxytryptamine receptor (Lymnaea stagnalis (Great pond snail)).